The chain runs to 171 residues: Tetratricopeptide repeat protein 9C (171 aa).

TPR repeat units lie at residues 8 to 41, 72 to 107, and 108 to 141; these read AQLY…LRGL, TDCY…QPDN, and AKAL…KPKD.

This sequence belongs to the TTC9 family.

The sequence is that of Tetratricopeptide repeat protein 9C (TTC9C) from Bos taurus (Bovine).